A 299-amino-acid polypeptide reads, in one-letter code: Protease HtpX homolog (299 aa).

Transmembrane regions (helical) follow at residues 14-34 (WLLLLVFFLLLGLVGYGVGNL) and 39-59 (GFGGLILALVIGFIYVVTMIF). His143 contributes to the Zn(2+) binding site. Glu144 is an active-site residue. His147 is a Zn(2+) binding site. The next 2 helical transmembrane spans lie at 153 to 173 (IRISTIAVALASAITMLAGMA) and 198 to 218 (IVFLILSLIAIILAPLAATLV). Glu227 contributes to the Zn(2+) binding site.

It belongs to the peptidase M48B family. Requires Zn(2+) as cofactor.

The protein resides in the cell membrane. The protein is Protease HtpX homolog of Streptococcus thermophilus (strain ATCC BAA-250 / LMG 18311).